A 102-amino-acid chain; its full sequence is Putative septation protein SpoVG 2 (102 aa).

The protein belongs to the SpoVG family.

Functionally, could be involved in septation. The chain is Putative septation protein SpoVG 2 from Listeria innocua serovar 6a (strain ATCC BAA-680 / CLIP 11262).